A 74-amino-acid polypeptide reads, in one-letter code: Heat shock factor-binding protein 1-like protein 1 (74 aa).

A coiled-coil region spans residues 12–65; the sequence is RALRDAAENLFQELQEHFQALTATLNLRMEEMGNRIEDLQKNVKDLMVQAGIEN.

This sequence belongs to the HSBP1 family.

This chain is Heat shock factor-binding protein 1-like protein 1 (HSBP1L1), found in Homo sapiens (Human).